Consider the following 104-residue polypeptide: uncharacterized protein (104 aa).

Residues 77–98 (IAAVRANIIICACFFYLFCYCS) traverse the membrane as a helical segment.

Its subcellular location is the membrane. This is an uncharacterized protein from Saccharomyces cerevisiae (strain ATCC 204508 / S288c) (Baker's yeast).